The chain runs to 551 residues: Putative hydroxymethylpyrimidine/phosphomethylpyrimidine kinase 2 (551 aa).

4-amino-5-hydroxymethyl-2-methylpyrimidine is bound at residue Glu-76.

The protein in the N-terminal section; belongs to the ThiD family. This sequence in the C-terminal section; belongs to the thiaminase-2 family.

The protein resides in the cytoplasm. It carries out the reaction 4-amino-5-hydroxymethyl-2-methylpyrimidine + ATP = 4-amino-2-methyl-5-(phosphooxymethyl)pyrimidine + ADP + H(+). The catalysed reaction is 4-amino-2-methyl-5-(phosphooxymethyl)pyrimidine + ATP = 4-amino-2-methyl-5-(diphosphooxymethyl)pyrimidine + ADP. It participates in cofactor biosynthesis; thiamine diphosphate biosynthesis; 4-amino-2-methyl-5-diphosphomethylpyrimidine from 5-amino-1-(5-phospho-D-ribosyl)imidazole: step 2/3. It functions in the pathway cofactor biosynthesis; thiamine diphosphate biosynthesis; 4-amino-2-methyl-5-diphosphomethylpyrimidine from 5-amino-1-(5-phospho-D-ribosyl)imidazole: step 3/3. Functionally, catalyzes the phosphorylation of hydroxymethylpyrimidine phosphate (HMP-P) to HMP-PP, and of HMP to HMP-P. The polypeptide is Putative hydroxymethylpyrimidine/phosphomethylpyrimidine kinase 2 (Schizosaccharomyces pombe (strain 972 / ATCC 24843) (Fission yeast)).